The sequence spans 209 residues: MKDVREEYHADGLIEATLHDDPLEQARRWVDEAIEAELPLPNAITLATVSANGQPSSRVVLLKGIENQGFTFFTHYDSRKGEEIAANPKVSFTMFWQPFDRQMIVIGEAQKVDQEESDSYFASRPYASQVSAAISPQSRPASREWLEAEVSRLEQEFPSAPVPRPEQWGGYRIIPTEIQFWHGRPSRLHDRFRYVKQGDGCWQRERLAP.

Substrate contacts are provided by residues 5-8 and lysine 63; that span reads REEY. FMN-binding positions include 58-63, 73-74, arginine 79, lysine 80, and glutamine 102; these read RVVLLK and FT. Residues tyrosine 120, arginine 124, and serine 128 each contribute to the substrate site. Residues 137–138 and tryptophan 181 contribute to the FMN site; that span reads QS. 187–189 lines the substrate pocket; it reads RLH. FMN is bound at residue arginine 191.

It belongs to the pyridoxamine 5'-phosphate oxidase family. In terms of assembly, homodimer. The cofactor is FMN.

It carries out the reaction pyridoxamine 5'-phosphate + O2 + H2O = pyridoxal 5'-phosphate + H2O2 + NH4(+). The enzyme catalyses pyridoxine 5'-phosphate + O2 = pyridoxal 5'-phosphate + H2O2. Its pathway is cofactor metabolism; pyridoxal 5'-phosphate salvage; pyridoxal 5'-phosphate from pyridoxamine 5'-phosphate: step 1/1. The protein operates within cofactor metabolism; pyridoxal 5'-phosphate salvage; pyridoxal 5'-phosphate from pyridoxine 5'-phosphate: step 1/1. Functionally, catalyzes the oxidation of either pyridoxine 5'-phosphate (PNP) or pyridoxamine 5'-phosphate (PMP) into pyridoxal 5'-phosphate (PLP). In Alcanivorax borkumensis (strain ATCC 700651 / DSM 11573 / NCIMB 13689 / SK2), this protein is Pyridoxine/pyridoxamine 5'-phosphate oxidase.